Here is a 342-residue protein sequence, read N- to C-terminus: NADH-ubiquinone oxidoreductase chain 2 (342 aa).

9 helical membrane passes run 25–45 (TPWL…IPML), 58–78 (IKYF…ILII), 94–114 (MMIM…FWLP), 146–166 (MSSF…MGGL), 174–194 (ILAY…TISE), 195–215 (NTWE…IFMF), 238–258 (FMMM…GFLP), 274–294 (LVLL…RISF), and 316–336 (VVAL…TSNF).

Belongs to the complex I subunit 2 family.

Its subcellular location is the mitochondrion inner membrane. The enzyme catalyses a ubiquinone + NADH + 5 H(+)(in) = a ubiquinol + NAD(+) + 4 H(+)(out). Core subunit of the mitochondrial membrane respiratory chain NADH dehydrogenase (Complex I) that is believed to belong to the minimal assembly required for catalysis. Complex I functions in the transfer of electrons from NADH to the respiratory chain. The immediate electron acceptor for the enzyme is believed to be ubiquinone. This chain is NADH-ubiquinone oxidoreductase chain 2 (ND2), found in Locusta migratoria (Migratory locust).